Reading from the N-terminus, the 345-residue chain is Transcription factor 19 (345 aa).

In terms of domain architecture, FHA spans 31 to 88; that stretch reads YRLGHRADLCDVALRPQQEPGLISGIHAELHAEPRGDDWRVSLEDHSSQGTLVNNVRL. A Phosphoserine modification is found at serine 78. The interval 190 to 227 is disordered; it reads LTFSPSWGGPKSLPVPAPPGEMGTTPSAPPQRNRRKSV. The PHD-type zinc finger occupies 293-342; the sequence is AAPCCCLPQEETVAWVQCDGCDVWFHVACVGCSIQAAREADFRCPGCRAG. The Zn(2+) site is built by cysteine 296, cysteine 298, cysteine 310, cysteine 313, histidine 318, cysteine 321, cysteine 336, and cysteine 339.

Its subcellular location is the nucleus. Functionally, potential transcription factor that may play a role in the regulation of genes involved in cell cycle G1/S transition. May bind to regulatory elements of genes, including the promoter of the transcription factor FOXO1. This is Transcription factor 19 (TCF19) from Homo sapiens (Human).